A 621-amino-acid chain; its full sequence is Kininogen-1 (621 aa).

A signal peptide spans 1-18 (MKLITILFLCSRLLPSLT). The region spanning 27 to 131 (CNDQDVFKAV…IQTCLITPAE (105 aa)) is the Cystatin kininogen-type 1 domain. 9 cysteine pairs are disulfide-bonded: Cys27-Cys591, Cys82-Cys93, Cys106-Cys125, Cys141-Cys144, Cys205-Cys217, Cys228-Cys247, Cys263-Cys266, Cys327-Cys339, and Cys350-Cys369. Asn47 and Asn87 each carry an N-linked (GlcNAc...) asparagine glycan. Thr136 is a glycosylation site (O-linked (GalNAc...) threonine; partial). In terms of domain architecture, Cystatin kininogen-type 2 spans 150 to 253 (TKSPDLEPVL…SQKCDLYPVK (104 aa)). 2 N-linked (GlcNAc...) asparagine glycosylation sites follow: Asn168 and Asn169. Asn197 is a glycosylation site (N-linked (GlcNAc...) asparagine; partial). The N-linked (GlcNAc...) asparagine glycan is linked to Asn204. Positions 272–375 (VDSPDLEEPL…TVNCQPLGQT (104 aa)) constitute a Cystatin kininogen-type 3 domain. The residue at position 331 (Ser331) is a Phosphoserine. The interval 396–497 (EGSTTVSLPH…GKNNGKHYDW (102 aa)) is disordered. Ser398 is a glycosylation site (O-linked (GalNAc...) serine). 2 O-linked (GalNAc...) threonine glycosylation sites follow: Thr399 and Thr400. O-linked (GalNAc...) serine glycosylation is present at Ser406. Residues 444-492 (GHKHKHDQGHGHHGSHGLGHGHQKQHGLGHGHKHGHGHGKHKNKGKNNG) show a composition bias toward basic residues. O-linked (GalNAc...) serine glycosylation occurs at Ser512. 6 O-linked (GalNAc...) threonine glycosylation sites follow: Thr520, Thr524, Thr536, Thr548, Thr553, and Thr570. O-linked (GalNAc...) serine glycosylation occurs at Ser581.

Post-translationally, bradykinin is released from kininogen by plasma kallikrein. Phosphorylated by FAM20C in the extracellular medium. In terms of processing, bradykinin is inactivated by ACE, which removes the dipeptide Arg-Phe from its C-terminus. Plasma.

Its subcellular location is the secreted. The protein localises to the extracellular space. Kininogens are inhibitors of thiol proteases. HMW-kininogen plays an important role in blood coagulation by helping to position optimally prekallikrein and factor XI next to factor XII; HMW-kininogen inhibits the thrombin- and plasmin-induced aggregation of thrombocytes. LMW-kininogen inhibits the aggregation of thrombocytes. LMW-kininogen is in contrast to HMW-kininogen not involved in blood clotting. Functionally, the active peptide bradykinin is a potent vasodilatator that is released from HMW-kininogen shows a variety of physiological effects: (A) influence in smooth muscle contraction, (B) induction of hypotension, (C) natriuresis and diuresis, (D) decrease in blood glucose level, (E) it is a mediator of inflammation and causes (E1) increase in vascular permeability, (E2) stimulation of nociceptors (4E3) release of other mediators of inflammation (e.g. prostaglandins), (F) it has a cardioprotective effect (directly via bradykinin action, indirectly via endothelium-derived relaxing factor action). This chain is Kininogen-1 (KNG1), found in Bos taurus (Bovine).